Here is a 1026-residue protein sequence, read N- to C-terminus: Multidrug resistance protein MdtC (1026 aa).

Transmembrane regions (helical) follow at residues 15–35 (ILIA…LPVA), 333–353 (EVEE…FLFL), 360–380 (LIPA…MYLC), 387–407 (LSLM…IVVL), 431–451 (VGFT…PLLL), 463–483 (FAVT…TLTP), 528–548 (LVGV…IAIP), 853–873 (LILI…LYES), 897–917 (LFNA…IGIV), 953–973 (PIMM…LSGG), and 984–1004 (ITIV…TPVV).

Belongs to the resistance-nodulation-cell division (RND) (TC 2.A.6) family. MdtC subfamily. Part of a tripartite efflux system composed of MdtA, MdtB and MdtC. MdtC forms a heteromultimer with MdtB.

Its subcellular location is the cell inner membrane. This chain is Multidrug resistance protein MdtC, found in Salmonella dublin (strain CT_02021853).